Here is a 336-residue protein sequence, read N- to C-terminus: UDP-N-acetylenolpyruvoylglucosamine reductase (336 aa).

One can recognise an FAD-binding PCMH-type domain in the interval 17–188 (LRSLAERFVE…WDVTFRLPKK (172 aa)). The active site involves R164. Residue S237 is the Proton donor of the active site. The active site involves E332.

This sequence belongs to the MurB family. FAD is required as a cofactor.

It localises to the cytoplasm. It catalyses the reaction UDP-N-acetyl-alpha-D-muramate + NADP(+) = UDP-N-acetyl-3-O-(1-carboxyvinyl)-alpha-D-glucosamine + NADPH + H(+). The protein operates within cell wall biogenesis; peptidoglycan biosynthesis. Functionally, cell wall formation. This chain is UDP-N-acetylenolpyruvoylglucosamine reductase, found in Bdellovibrio bacteriovorus (strain ATCC 15356 / DSM 50701 / NCIMB 9529 / HD100).